Reading from the N-terminus, the 1242-residue chain is Receptor-type adenylate cyclase GRESAG 4.1 (1242 aa).

Residues 1–39 (MHWQEGGGRGCVYTHGNCRRNLTARALQALQHVEALTCH) are Cytoplasmic-facing. Residues 40-60 (YCVSLLHLLPLLLMWMPPVCA) form a helical membrane-spanning segment. Residues 61 to 862 (DDSAVTVNVL…THTVTDSWNN (802 aa)) are Extracellular-facing. Asparagine 116, asparagine 289, asparagine 318, asparagine 338, asparagine 401, asparagine 534, asparagine 563, asparagine 603, asparagine 702, asparagine 741, and asparagine 818 each carry an N-linked (GlcNAc...) asparagine glycan. A helical membrane pass occupies residues 863-883 (FWVCIRLVIIYCPWCVPTHLP). Topologically, residues 884–1242 (AERRNNNRAP…PFYDMHLQEY (359 aa)) are cytoplasmic. The 156-residue stretch at 901 to 1056 (TLIFTDIESS…RTPNMAARTE (156 aa)) folds into the Guanylate cyclase domain. Mg(2+) contacts are provided by aspartate 906 and aspartate 949.

It belongs to the adenylyl cyclase class-3 family. Mg(2+) is required as a cofactor.

It localises to the membrane. The catalysed reaction is ATP = 3',5'-cyclic AMP + diphosphate. Its function is as follows. Could act as a receptor for an unknown ligand. In Trypanosoma brucei brucei, this protein is Receptor-type adenylate cyclase GRESAG 4.1 (GRESAG 4.1).